The following is a 79-amino-acid chain: Defensin-like protein 117 (79 aa).

A signal peptide spans 1–24; that stretch reads MTTTKTMLVAFVLTLFFVISSVHC. Cystine bridges form between Cys-40–Cys-75, Cys-46–Cys-68, Cys-53–Cys-73, and Cys-57–Cys-74.

This sequence belongs to the DEFL family.

It localises to the secreted. The sequence is that of Defensin-like protein 117 from Arabidopsis thaliana (Mouse-ear cress).